Consider the following 270-residue polypeptide: Centromere protein Q (270 aa).

The tract at residues 1 to 59 is disordered; the sequence is MSGKANTSKKKSQRVKRNVKQRADKEDEELDSPENKVGNRAKRNRSHAGHLSSKEQTKC. Composition is skewed to basic residues over residues 7–20 and 39–48; these read TSKK…RNVK and NRAKRNRSHA. Serine 52 carries the phosphoserine modification. A coiled-coil region spans residues 143 to 205; that stretch reads LKVEREQERA…EEEMKEVFHI (63 aa).

It belongs to the CENP-Q/OKP1 family. Component of the CENPA-CAD complex, composed of CENPI, CENPK, CENPL, CENPO, CENPP, CENPQ, CENPR and CENPS. The CENPA-CAD complex interacts with the CENPA-NAC complex, at least composed of CENPA, CENPC, CENPH, CENPM, CENPN, CENPT and CENPU. Phosphorylation at Ser-52 is essential for CENPE recruitment to kinetochores and orderly chromosome congression.

The protein resides in the nucleus. It localises to the chromosome. The protein localises to the centromere. Its function is as follows. Component of the CENPA-CAD (nucleosome distal) complex, a complex recruited to centromeres which is involved in assembly of kinetochore proteins, mitotic progression and chromosome segregation. May be involved in incorporation of newly synthesized CENPA into centromeres via its interaction with the CENPA-NAC complex. Plays an important role in chromosome congression and in the recruitment of CENP-O complex (which comprises CENPO, CENPP, CENPQ and CENPU), CENPE and PLK1 to the kinetochores. This is Centromere protein Q (Cenpq) from Rattus norvegicus (Rat).